The chain runs to 291 residues: MTTLAIDIGGTKLAAALIDNNLRISQRRELPTPASKTPDALREALKALVEPLRAEARQVAIASTGIIQEGMLLALNPHNLGGLLHFPLIQTLETIAGLPTLAVNDAQAAAWAEYHALPDDIRDMVFITVSTGVGGGVVCDGKLLTGKGGLAGHLGHTLADPHGPVCGCGRVGCVEAIASGRGMAAAARDDLAGCDAKTLFIRAGEGHQQARHLVSQSAQVIARMIADVKATTDCQCVVIGGSVGLAEGYLEQVRAFLMQEPAPYHVALNAARYRHDAGLLGAALLAQGDTL.

ATP-binding positions include 5–12 (AIDIGGTK) and 132–139 (GVGGGVVC). Zn(2+) is bound by residues His-156, Cys-166, Cys-168, and Cys-173.

This sequence belongs to the ROK (NagC/XylR) family. NanK subfamily. As to quaternary structure, homodimer.

The enzyme catalyses an N-acyl-D-mannosamine + ATP = an N-acyl-D-mannosamine 6-phosphate + ADP + H(+). Its pathway is amino-sugar metabolism; N-acetylneuraminate degradation; D-fructose 6-phosphate from N-acetylneuraminate: step 2/5. Its function is as follows. Catalyzes the phosphorylation of N-acetylmannosamine (ManNAc) to ManNAc-6-P. In Salmonella paratyphi B (strain ATCC BAA-1250 / SPB7), this protein is N-acetylmannosamine kinase.